The following is a 92-amino-acid chain: MARSVWKGPFIDGYLLNKAEKARSSGRNEVIKIWSRRSTIMPQFVGLTFGVYNGQKFVPVLVTEQMVGHKFGEFAPTRTYYGHAADKKAKRK.

This sequence belongs to the universal ribosomal protein uS19 family.

Its function is as follows. Protein S19 forms a complex with S13 that binds strongly to the 16S ribosomal RNA. In Rhodospirillum rubrum (strain ATCC 11170 / ATH 1.1.1 / DSM 467 / LMG 4362 / NCIMB 8255 / S1), this protein is Small ribosomal subunit protein uS19.